The primary structure comprises 131 residues: Lymphocyte antigen 6C2 (131 aa).

An N-terminal signal peptide occupies residues 1–26 (MDSTHATKSCLLILLVALLCAGRAQG). One can recognise a UPAR/Ly6 domain in the interval 27–116 (LQCYECYGVP…TAGSTWTMAG (90 aa)). 5 cysteine pairs are disulfide-bonded: C29-C53, C32-C41, C46-C74, C78-C95, and C96-C101. G109 carries the GPI-anchor amidated glycine lipid modification. The propeptide at 110–131 (STWTMAGVLLFSLSSVILQTLL) is removed in mature form.

It localises to the cell membrane. The protein is Lymphocyte antigen 6C2 (Ly6c2) of Mus musculus (Mouse).